A 335-amino-acid polypeptide reads, in one-letter code: Glycerol-3-phosphate dehydrogenase [NAD(P)+] (335 aa).

NADPH contacts are provided by S15, Y16, H36, and K110. Sn-glycerol 3-phosphate-binding residues include K110, G139, and T141. A143 lines the NADPH pocket. Sn-glycerol 3-phosphate contacts are provided by K195, D248, S258, R259, and N260. Catalysis depends on K195, which acts as the Proton acceptor. R259 provides a ligand contact to NADPH. NADPH-binding residues include V283 and E285.

The protein belongs to the NAD-dependent glycerol-3-phosphate dehydrogenase family.

It localises to the cytoplasm. It carries out the reaction sn-glycerol 3-phosphate + NAD(+) = dihydroxyacetone phosphate + NADH + H(+). It catalyses the reaction sn-glycerol 3-phosphate + NADP(+) = dihydroxyacetone phosphate + NADPH + H(+). The protein operates within membrane lipid metabolism; glycerophospholipid metabolism. In terms of biological role, catalyzes the reduction of the glycolytic intermediate dihydroxyacetone phosphate (DHAP) to sn-glycerol 3-phosphate (G3P), the key precursor for phospholipid synthesis. This is Glycerol-3-phosphate dehydrogenase [NAD(P)+] from Mannheimia succiniciproducens (strain KCTC 0769BP / MBEL55E).